Reading from the N-terminus, the 493-residue chain is Sodium-coupled neutral amino acid symporter 2 (493 aa).

Residues 1 to 72 lie on the Cytoplasmic side of the membrane; that stretch reads MNNAEVLNVA…LPGTTSFGMS (72 aa). Residues 1-92 form a regulates protein turnover upon amino acid deprivation region; that stretch reads MNNAEVLNVA…SGILGLSYAM (92 aa). A helical membrane pass occupies residues 73 to 92; it reads VFNLSNAIVGSGILGLSYAM. N78 provides a ligand contact to Na(+). Residues 93 to 98 lie on the Extracellular side of the membrane; it reads ANTGIA. Residues 99–119 form a helical membrane-spanning segment; it reads LFMILLVFVTVFSLYSIHLLL. The Cytoplasmic portion of the chain corresponds to 120-154; it reads KTANEGGSLLYEQLGLKAFGIPGKLAASGSVTLQN. The helical transmembrane segment at 155-173 threads the bilayer; that stretch reads IGAMSSYLYIVKYELPLVI. The Extracellular portion of the chain corresponds to 174-184; it reads KALMDIKESNG. A helical transmembrane segment spans residues 185-205; it reads EWYLNGDYLVIMVSLAIILPL. Topologically, residues 206–213 are cytoplasmic; it reads SLLRNLGY. A helical membrane pass occupies residues 214 to 234; that stretch reads LGYTSGFSPLCMVFFLIVVIY. Residues 235 to 279 lie on the Extracellular side of the membrane; sequence KKFEIPCPLEAMNMTSNSSSHDHMAHNETDDEMCKPKYFVFNSQT. Residues C241 and C268 are joined by a disulfide bond. N-linked (GlcNAc...) asparagine glycosylation is found at N247, N251, and N261. Residues 280-300 form a helical membrane-spanning segment; sequence VYAVPILTFSFVCHPAVLPIY. Topologically, residues 301–316 are cytoplasmic; sequence QELKGRSRRRMMNVSN. Residues 317–337 traverse the membrane as a helical segment; it reads VSFFAMFIMYLLAALFGYLTF. The Extracellular segment spans residues 338 to 358; that stretch reads YSKVEPELLHTYSKVFGAGVI. A helical transmembrane segment spans residues 359–379; it reads FVVVRLAVLMAVTLTVPIVIF. Residue T373 participates in Na(+) binding. Over 380–400 the chain is Cytoplasmic; the sequence is PIRSSLNELFCSGKDFAWIRH. The chain crosses the membrane as a helical span at residues 401 to 421; sequence ILITFLILAFTNVLVIFVPTI. Residues 422-423 are Extracellular-facing; sequence RD. Residues 424–444 traverse the membrane as a helical segment; it reads IFGFIGASAAAMLVFILPSAF. Residues 445–459 lie on the Cytoplasmic side of the membrane; sequence YIRLVKKESMKSVQK. A helical transmembrane segment spans residues 460–482; the sequence is IGALLFLIGGIIVMIGSMTLIIL. Residues 483 to 493 are Extracellular-facing; that stretch reads DWIHNSTSGGN.

The protein belongs to the amino acid/polyamine transporter 2 family.

The protein localises to the cell membrane. It catalyses the reaction L-alanine(in) + Na(+)(in) = L-alanine(out) + Na(+)(out). The catalysed reaction is glycine(in) + Na(+)(in) = glycine(out) + Na(+)(out). The enzyme catalyses L-serine(in) + Na(+)(in) = L-serine(out) + Na(+)(out). It carries out the reaction L-proline(in) + Na(+)(in) = L-proline(out) + Na(+)(out). It catalyses the reaction L-methionine(in) + Na(+)(in) = L-methionine(out) + Na(+)(out). The catalysed reaction is L-histidine(in) + Na(+)(in) = L-histidine(out) + Na(+)(out). The enzyme catalyses L-asparagine(in) + Na(+)(in) = L-asparagine(out) + Na(+)(out). It carries out the reaction L-glutamine(in) + Na(+)(in) = L-glutamine(out) + Na(+)(out). It catalyses the reaction L-threonine(in) + Na(+)(in) = L-threonine(out) + Na(+)(out). The catalysed reaction is L-leucine(in) + Na(+)(in) = L-leucine(out) + Na(+)(out). The enzyme catalyses L-phenylalanine(in) + Na(+)(in) = L-phenylalanine(out) + Na(+)(out). Its activity is regulated as follows. Inhibited by N-methyl-D-glucamine. Inhibited by choline. Allosteric regulation of sodium ions binding by pH. In terms of biological role, symporter that cotransports neutral amino acids and sodium ions from the extracellular to the intracellular side of the cell membrane. The transport is pH-sensitive, Li(+)-intolerant, electrogenic, driven by the Na(+) electrochemical gradient and cotransports of neutral amino acids and sodium ions with a stoichiometry of 1:1. The polypeptide is Sodium-coupled neutral amino acid symporter 2 (Xenopus tropicalis (Western clawed frog)).